We begin with the raw amino-acid sequence, 500 residues long: Glucose-6-phosphate isomerase (500 aa).

The active-site Proton donor is the E332. Catalysis depends on residues H363 and K473.

This sequence belongs to the GPI family.

Its subcellular location is the cytoplasm. It carries out the reaction alpha-D-glucose 6-phosphate = beta-D-fructose 6-phosphate. The protein operates within carbohydrate biosynthesis; gluconeogenesis. It participates in carbohydrate degradation; glycolysis; D-glyceraldehyde 3-phosphate and glycerone phosphate from D-glucose: step 2/4. Catalyzes the reversible isomerization of glucose-6-phosphate to fructose-6-phosphate. The sequence is that of Glucose-6-phosphate isomerase from Rhizorhabdus wittichii (strain DSM 6014 / CCUG 31198 / JCM 15750 / NBRC 105917 / EY 4224 / RW1) (Sphingomonas wittichii).